Reading from the N-terminus, the 465-residue chain is Cysteine--tRNA ligase (465 aa).

Cysteine 29 lines the Zn(2+) pocket. The 'HIGH' region signature appears at 31 to 41 (PTVYNYIHIGN). The Zn(2+) site is built by cysteine 209, histidine 234, and glutamate 238. The 'KMSKS' region signature appears at 266-270 (KMSKS). Lysine 269 contributes to the ATP binding site. Residue serine 270 is modified to Phosphoserine.

It belongs to the class-I aminoacyl-tRNA synthetase family. Monomer. The cofactor is Zn(2+).

It localises to the cytoplasm. It catalyses the reaction tRNA(Cys) + L-cysteine + ATP = L-cysteinyl-tRNA(Cys) + AMP + diphosphate. This Anoxybacillus flavithermus (strain DSM 21510 / WK1) protein is Cysteine--tRNA ligase.